Reading from the N-terminus, the 241-residue chain is Transcription factor HEC1 (241 aa).

A bHLH domain is found at 128 to 177 (ISKDPQSVAARHRRERISERIRILQRLVPGGTKMDTASMLDEAIHYVKFL).

As to quaternary structure, homodimer. Interacts with SPT. Interacts with BZIP30. As to expression, flowers, especially in gynoecium.

The protein resides in the nucleus. Required for the female reproductive tract development and fertility. This chain is Transcription factor HEC1 (HEC1), found in Arabidopsis thaliana (Mouse-ear cress).